The following is a 142-amino-acid chain: MKTFTATPETVTRDWFVVDAEGKTLGRIATEIATRLRGKHKPEYTPHVDTGDYIIVINAEKVTVTGNKAAGKIYYSHSGFIGGIKQISFEKLQAHKPEMIIEKAVKGMLPKGPLGRAMFRKLKVYAGTEHNHAAQQPQVLDI.

Belongs to the universal ribosomal protein uL13 family. As to quaternary structure, part of the 50S ribosomal subunit.

This protein is one of the early assembly proteins of the 50S ribosomal subunit, although it is not seen to bind rRNA by itself. It is important during the early stages of 50S assembly. The polypeptide is Large ribosomal subunit protein uL13 (Shewanella frigidimarina (strain NCIMB 400)).